Here is a 425-residue protein sequence, read N- to C-terminus: Kynurenine/alpha-aminoadipate aminotransferase, mitochondrial (425 aa).

The N-terminal 29 residues, Met-1 to Gly-29, are a transit peptide targeting the mitochondrion. Arg-20 lines the substrate pocket. At Lys-69 the chain carries N6-acetyllysine. Tyr-74 and Tyr-142 together coordinate substrate. N6-acetyllysine is present on Lys-179. The segment at Glu-181–Leu-208 is disordered. Residues Pro-198–Leu-208 show a composition bias toward polar residues. Asn-202 lines the substrate pocket. Lys-263 is subject to N6-(pyridoxal phosphate)lysine; alternate. An N6-acetyllysine; alternate mark is found at Lys-263, Lys-339, and Lys-367. An N6-succinyllysine; alternate mark is found at Lys-263, Lys-339, and Lys-367. Arg-399 provides a ligand contact to substrate. N6-acetyllysine is present on Lys-422.

The protein belongs to the class-I pyridoxal-phosphate-dependent aminotransferase family. In terms of assembly, homodimer. Requires pyridoxal 5'-phosphate as cofactor. In terms of tissue distribution, higher expression in the liver. Also found in heart, brain, kidney, pancreas, prostate, testis and ovary.

It localises to the mitochondrion. It carries out the reaction glycine + 2-oxoglutarate = glyoxylate + L-glutamate. The catalysed reaction is L-kynurenine + 2-oxoglutarate = kynurenate + L-glutamate + H2O. The enzyme catalyses L-kynurenine + glyoxylate = kynurenate + glycine + H2O. It catalyses the reaction 3-hydroxy-L-kynurenine + glyoxylate = xanthurenate + glycine + H2O. It carries out the reaction 2-oxohexanoate + L-kynurenine = L-2-aminohexanoate + kynurenate + H2O. The catalysed reaction is 3-phenylpyruvate + L-kynurenine = kynurenate + L-phenylalanine + H2O. The enzyme catalyses 4-methylsulfanyl-2-oxobutanoate + L-kynurenine = kynurenate + L-methionine + H2O. It catalyses the reaction 2-oxo-3-sulfanylpropanoate + L-kynurenine = kynurenate + L-cysteine + H2O. It carries out the reaction indole-3-pyruvate + L-kynurenine = kynurenate + L-tryptophan + H2O. The catalysed reaction is 2-oxopentanoate + L-kynurenine = L-2-aminopentanoate + kynurenate + H2O. The enzyme catalyses 4-methyl-2-oxopentanoate + L-kynurenine = kynurenate + L-leucine + H2O. It catalyses the reaction L-2-aminoadipate + 2-oxoglutarate = 2-oxoadipate + L-glutamate. It carries out the reaction glyoxylate + L-methionine = 4-methylsulfanyl-2-oxobutanoate + glycine. The catalysed reaction is L-2-aminoadipate + glyoxylate = 2-oxoadipate + glycine. The enzyme catalyses L-tyrosine + glyoxylate = 3-(4-hydroxyphenyl)pyruvate + glycine. It catalyses the reaction glyoxylate + L-phenylalanine = 3-phenylpyruvate + glycine. It carries out the reaction L-tryptophan + glyoxylate = indole-3-pyruvate + glycine. The catalysed reaction is L-leucine + glyoxylate = 4-methyl-2-oxopentanoate + glycine. The enzyme catalyses 2-oxobutanoate + L-kynurenine = (2S)-2-aminobutanoate + kynurenate + H2O. It catalyses the reaction 2-oxoadipate + L-kynurenine = L-2-aminoadipate + kynurenate + H2O. Its pathway is amino-acid degradation; L-lysine degradation via saccharopine pathway; glutaryl-CoA from L-lysine: step 4/6. With respect to regulation, kynurenine transaminase activity is competitively inhibited by aminoadipate, asparagine, glutamate, histidine, cysteine, lysine, 3-hydroxy-kynurenine and phenylalanine. Its function is as follows. Transaminase with broad substrate specificity. Has transaminase activity towards aminoadipate, kynurenine, methionine and glutamate. Shows activity also towards tryptophan, aspartate and hydroxykynurenine. Accepts a variety of oxo-acids as amino-group acceptors, with a preference for 2-oxoglutarate, 2-oxocaproic acid, phenylpyruvate and alpha-oxo-gamma-methiol butyric acid. Can also use glyoxylate as amino-group acceptor (in vitro). In Homo sapiens (Human), this protein is Kynurenine/alpha-aminoadipate aminotransferase, mitochondrial.